An 84-amino-acid chain; its full sequence is Exodeoxyribonuclease 7 small subunit (84 aa).

This sequence belongs to the XseB family. In terms of assembly, heterooligomer composed of large and small subunits.

Its subcellular location is the cytoplasm. The catalysed reaction is Exonucleolytic cleavage in either 5'- to 3'- or 3'- to 5'-direction to yield nucleoside 5'-phosphates.. Its function is as follows. Bidirectionally degrades single-stranded DNA into large acid-insoluble oligonucleotides, which are then degraded further into small acid-soluble oligonucleotides. The polypeptide is Exodeoxyribonuclease 7 small subunit (Haemophilus influenzae (strain 86-028NP)).